Consider the following 536-residue polypeptide: Xylulose kinase (536 aa).

Residues H99, R170, D280, and N281 each contribute to the substrate site. ATP contacts are provided by residues W355, 441 to 442 (GA), and N445.

Belongs to the FGGY kinase family. Monomer.

The catalysed reaction is D-xylulose + ATP = D-xylulose 5-phosphate + ADP + H(+). In terms of biological role, phosphorylates D-xylulose to produce D-xylulose 5-phosphate, a molecule that may play an important role in the regulation of glucose metabolism and lipogenesis. This is Xylulose kinase (XYLB) from Homo sapiens (Human).